Consider the following 374-residue polypeptide: Formylglycine-generating enzyme (374 aa).

The N-terminal stretch at Met1–Gly33 is a signal peptide. Cys50 and Cys52 are disulfide-bonded. The segment at Arg57–Gly102 is disordered. Glu130 contributes to the Ca(2+) binding site. An N-linked (GlcNAc...) asparagine glycan is attached at Asn141. Intrachain disulfides connect Cys218–Cys365 and Cys235–Cys346. Ca(2+)-binding residues include Asn259, Ile260, Asp273, Phe275, Asn293, Gly296, Ala298, and Glu300. Cu(2+) is bound by residues Cys336 and Cys341. The interval Cys341–Asn360 is interaction with sulfatases.

This sequence belongs to the sulfatase-modifying factor family. As to quaternary structure, monomer, homodimer and heterodimer with SUMF2. Requires Cu(2+) as cofactor. N-glycosylated. Contains high-mannose-type oligosaccharides.

The protein localises to the endoplasmic reticulum lumen. The catalysed reaction is L-cysteinyl-[sulfatase] + 2 a thiol + O2 = an organic disulfide + 3-oxo-L-alanyl-[sulfatase] + hydrogen sulfide + H2O + H(+). It participates in protein modification; sulfatase oxidation. Oxidase that catalyzes the conversion of cysteine to 3-oxoalanine on target proteins, using molecular oxygen and an unidentified reducing agent. 3-oxoalanine modification, which is also named formylglycine (fGly), occurs in the maturation of arylsulfatases and some alkaline phosphatases that use the hydrated form of 3-oxoalanine as a catalytic nucleophile. Known substrates include GALNS, ARSA, STS and ARSE. In Bos taurus (Bovine), this protein is Formylglycine-generating enzyme.